The primary structure comprises 341 residues: N-acetyl-gamma-glutamyl-phosphate reductase (341 aa).

The active site involves Cys163.

This sequence belongs to the NAGSA dehydrogenase family. Type 1 subfamily.

It is found in the cytoplasm. The catalysed reaction is N-acetyl-L-glutamate 5-semialdehyde + phosphate + NADP(+) = N-acetyl-L-glutamyl 5-phosphate + NADPH + H(+). It participates in amino-acid biosynthesis; L-arginine biosynthesis; N(2)-acetyl-L-ornithine from L-glutamate: step 3/4. Functionally, catalyzes the NADPH-dependent reduction of N-acetyl-5-glutamyl phosphate to yield N-acetyl-L-glutamate 5-semialdehyde. The chain is N-acetyl-gamma-glutamyl-phosphate reductase from Idiomarina loihiensis (strain ATCC BAA-735 / DSM 15497 / L2-TR).